The primary structure comprises 219 residues: Intraflagellar transport protein 22 (219 aa).

GTP is bound by residues 12–19 (GPSKSGKS) and 72–79 (WDVGGSSK).

This sequence belongs to the small GTPase superfamily. Rab family.

The protein resides in the cytoplasm. Its subcellular location is the cytoskeleton. It is found in the flagellum basal body. The protein localises to the cell projection. It localises to the cilium. The protein resides in the flagellum. Required for flagellum formation. The polypeptide is Intraflagellar transport protein 22 (IFT22) (Trypanosoma brucei brucei (strain 927/4 GUTat10.1)).